The primary structure comprises 301 residues: Protoheme IX farnesyltransferase (301 aa).

9 consecutive transmembrane segments (helical) span residues 34-54, 55-75, 102-121, 125-144, 152-172, 181-201, 222-242, 247-267, and 280-300; these read LVVF…HPLI, GLVS…FNMW, AWEC…AIAV, SALL…TMLL, IVIG…SVSG, LFAI…LLTL, SHIL…GLFV, LYEI…IAVF, and GLFK…IACV.

This sequence belongs to the UbiA prenyltransferase family. Protoheme IX farnesyltransferase subfamily.

It is found in the cell inner membrane. The catalysed reaction is heme b + (2E,6E)-farnesyl diphosphate + H2O = Fe(II)-heme o + diphosphate. Its pathway is porphyrin-containing compound metabolism; heme O biosynthesis; heme O from protoheme: step 1/1. Converts heme B (protoheme IX) to heme O by substitution of the vinyl group on carbon 2 of heme B porphyrin ring with a hydroxyethyl farnesyl side group. The chain is Protoheme IX farnesyltransferase from Anaplasma marginale (strain Florida).